A 776-amino-acid polypeptide reads, in one-letter code: Methionine--tRNA ligase (776 aa).

The 'HIGH' region motif lies at 10–20 (PYSNGPIHLGH). Zn(2+)-binding residues include C143, C146, C156, and C159. The short motif at 375–379 (KFSKS) is the 'KMSKS' region element. K378 lines the ATP pocket. The tRNA-binding domain maps to 676-776 (DFAKLDMRVG…KPISLGSKVR (101 aa)).

Belongs to the class-I aminoacyl-tRNA synthetase family. MetG type 1 subfamily. In terms of assembly, homodimer. Requires Zn(2+) as cofactor.

The protein resides in the cytoplasm. The enzyme catalyses tRNA(Met) + L-methionine + ATP = L-methionyl-tRNA(Met) + AMP + diphosphate. Is required not only for elongation of protein synthesis but also for the initiation of all mRNA translation through initiator tRNA(fMet) aminoacylation. The chain is Methionine--tRNA ligase (metG) from Nanoarchaeum equitans (strain Kin4-M).